We begin with the raw amino-acid sequence, 250 residues long: Proteasome subunit alpha type-4-1 (250 aa).

It belongs to the peptidase T1A family. The 26S proteasome consists of a 20S proteasome core and two 19S regulatory subunits. The 20S proteasome core is composed of 28 subunits that are arranged in four stacked rings, resulting in a barrel-shaped structure. The two end rings are each formed by seven alpha subunits, and the two central rings are each formed by seven beta subunits. The catalytic chamber with the active sites is on the inside of the barrel.

The protein resides in the cytoplasm. Its subcellular location is the nucleus. Its function is as follows. The proteasome is a multicatalytic proteinase complex which is characterized by its ability to cleave peptides with Arg, Phe, Tyr, Leu, and Glu adjacent to the leaving group at neutral or slightly basic pH. The proteasome has an ATP-dependent proteolytic activity. The protein is Proteasome subunit alpha type-4-1 of Oryza sativa subsp. indica (Rice).